Consider the following 156-residue polypeptide: Endoribonuclease YbeY (156 aa).

Residues H122, H126, and H132 each coordinate Zn(2+).

Belongs to the endoribonuclease YbeY family. The cofactor is Zn(2+).

The protein resides in the cytoplasm. In terms of biological role, single strand-specific metallo-endoribonuclease involved in late-stage 70S ribosome quality control and in maturation of the 3' terminus of the 16S rRNA. The protein is Endoribonuclease YbeY of Symbiobacterium thermophilum (strain DSM 24528 / JCM 14929 / IAM 14863 / T).